We begin with the raw amino-acid sequence, 196 residues long: GTP cyclohydrolase-2 (196 aa).

49 to 53 lines the GTP pocket; sequence RIHSE. Residues Cys54, Cys65, and Cys67 each contribute to the Zn(2+) site. GTP-binding positions include Gln70, 92 to 94, and Thr114; that span reads EGR. Catalysis depends on Asp126, which acts as the Proton acceptor. Catalysis depends on Arg128, which acts as the Nucleophile. GTP-binding residues include Thr149 and Lys154.

Belongs to the GTP cyclohydrolase II family. Homodimer. It depends on Zn(2+) as a cofactor.

It carries out the reaction GTP + 4 H2O = 2,5-diamino-6-hydroxy-4-(5-phosphoribosylamino)-pyrimidine + formate + 2 phosphate + 3 H(+). Its pathway is cofactor biosynthesis; riboflavin biosynthesis; 5-amino-6-(D-ribitylamino)uracil from GTP: step 1/4. In terms of biological role, catalyzes the conversion of GTP to 2,5-diamino-6-ribosylamino-4(3H)-pyrimidinone 5'-phosphate (DARP), formate and pyrophosphate. This Buchnera aphidicola subsp. Schizaphis graminum (strain Sg) protein is GTP cyclohydrolase-2.